We begin with the raw amino-acid sequence, 378 residues long: Probable G-protein coupled receptor frpr-1 (378 aa).

The next 7 helical transmembrane spans lie at 47-67 (LVVI…GNAL), 85-105 (LFAL…LFFL), 120-140 (AVLS…SVFI), 180-200 (VIVC…YNSP), 243-263 (TIVM…AIVI), 277-297 (IITL…PLTV), and 315-337 (SNLM…GSNF).

The protein belongs to the G-protein coupled receptor 1 family.

Its subcellular location is the cell membrane. This is Probable G-protein coupled receptor frpr-1 from Caenorhabditis elegans.